The primary structure comprises 78 residues: Large ribosomal subunit protein bL28 (78 aa).

Belongs to the bacterial ribosomal protein bL28 family.

This Corynebacterium aurimucosum (strain ATCC 700975 / DSM 44827 / CIP 107346 / CN-1) (Corynebacterium nigricans) protein is Large ribosomal subunit protein bL28.